Here is a 404-residue protein sequence, read N- to C-terminus: Cysteine desulfurase IscS (404 aa).

Pyridoxal 5'-phosphate contacts are provided by residues 75-76 (AT), Asn155, Gln183, and 203-205 (SAH). Residue Lys206 is modified to N6-(pyridoxal phosphate)lysine. Residue Thr243 coordinates pyridoxal 5'-phosphate. The active-site Cysteine persulfide intermediate is the Cys328. Cys328 serves as a coordination point for [2Fe-2S] cluster.

This sequence belongs to the class-V pyridoxal-phosphate-dependent aminotransferase family. NifS/IscS subfamily. In terms of assembly, homodimer. Forms a heterotetramer with IscU, interacts with other sulfur acceptors. Pyridoxal 5'-phosphate serves as cofactor.

It localises to the cytoplasm. The catalysed reaction is (sulfur carrier)-H + L-cysteine = (sulfur carrier)-SH + L-alanine. It functions in the pathway cofactor biosynthesis; iron-sulfur cluster biosynthesis. Master enzyme that delivers sulfur to a number of partners involved in Fe-S cluster assembly, tRNA modification or cofactor biosynthesis. Catalyzes the removal of elemental sulfur atoms from cysteine to produce alanine. Functions as a sulfur delivery protein for Fe-S cluster synthesis onto IscU, an Fe-S scaffold assembly protein, as well as other S acceptor proteins. The polypeptide is Cysteine desulfurase IscS (Pseudomonas entomophila (strain L48)).